A 606-amino-acid chain; its full sequence is Glutamine--fructose-6-phosphate aminotransferase [isomerizing] (606 aa).

Catalysis depends on Cys-2, which acts as the Nucleophile; for GATase activity. One can recognise a Glutamine amidotransferase type-2 domain in the interval 2-217 (CGIVGMVGEN…DGDVMVLRKD (216 aa)). 2 SIS domains span residues 284 to 423 (YEEL…INGY) and 455 to 596 (LSEK…PDKP). Lys-601 serves as the catalytic For Fru-6P isomerization activity.

In terms of assembly, homodimer.

It localises to the cytoplasm. It carries out the reaction D-fructose 6-phosphate + L-glutamine = D-glucosamine 6-phosphate + L-glutamate. Catalyzes the first step in hexosamine metabolism, converting fructose-6P into glucosamine-6P using glutamine as a nitrogen source. This Thermotoga maritima (strain ATCC 43589 / DSM 3109 / JCM 10099 / NBRC 100826 / MSB8) protein is Glutamine--fructose-6-phosphate aminotransferase [isomerizing].